The sequence spans 288 residues: Acetyl-coenzyme A carboxylase carboxyl transferase subunit beta (288 aa).

The CoA carboxyltransferase N-terminal domain occupies 32–288; sequence LLLICPKCKK…ILMLHNVEAR (257 aa). Positions 36, 39, 55, and 58 each coordinate Zn(2+). The segment at 36–58 adopts a C4-type zinc-finger fold; that stretch reads CPKCKKTLLKSELADNLDVCREC.

It belongs to the AccD/PCCB family. Acetyl-CoA carboxylase is a heterohexamer composed of biotin carboxyl carrier protein (AccB), biotin carboxylase (AccC) and two subunits each of ACCase subunit alpha (AccA) and ACCase subunit beta (AccD). Requires Zn(2+) as cofactor.

It localises to the cytoplasm. The enzyme catalyses N(6)-carboxybiotinyl-L-lysyl-[protein] + acetyl-CoA = N(6)-biotinyl-L-lysyl-[protein] + malonyl-CoA. Its pathway is lipid metabolism; malonyl-CoA biosynthesis; malonyl-CoA from acetyl-CoA: step 1/1. Component of the acetyl coenzyme A carboxylase (ACC) complex. Biotin carboxylase (BC) catalyzes the carboxylation of biotin on its carrier protein (BCCP) and then the CO(2) group is transferred by the transcarboxylase to acetyl-CoA to form malonyl-CoA. In Ruminiclostridium cellulolyticum (strain ATCC 35319 / DSM 5812 / JCM 6584 / H10) (Clostridium cellulolyticum), this protein is Acetyl-coenzyme A carboxylase carboxyl transferase subunit beta.